The following is a 274-amino-acid chain: NAD kinase (274 aa).

Asp50 serves as the catalytic Proton acceptor. NAD(+) contacts are provided by residues 50-51 (DG), 126-127 (NE), Arg152, Asp154, 165-170 (TAYNKS), and Ala189.

The protein belongs to the NAD kinase family. A divalent metal cation is required as a cofactor.

Its subcellular location is the cytoplasm. It carries out the reaction NAD(+) + ATP = ADP + NADP(+) + H(+). In terms of biological role, involved in the regulation of the intracellular balance of NAD and NADP, and is a key enzyme in the biosynthesis of NADP. Catalyzes specifically the phosphorylation on 2'-hydroxyl of the adenosine moiety of NAD to yield NADP. This chain is NAD kinase, found in Streptococcus gordonii (strain Challis / ATCC 35105 / BCRC 15272 / CH1 / DL1 / V288).